The following is a 614-amino-acid chain: Zinc finger protein ztf-7 (614 aa).

The segment covering 1-10 (MSTSGSGGGN) has biased composition (gly residues). Residues 1 to 160 (MSTSGSGGGN…SRPKKPEKMS (160 aa)) form a disordered region. Over residues 18–41 (NVASSPNANPKKNADTESSGGSKN) the composition is skewed to polar residues. Residues 54 to 69 (GSNSRNGSRTNSVSNS) show a composition bias toward low complexity. Residues 74–83 (NRKDWTDRKS) are compositionally biased toward basic and acidic residues. Positions 132–150 (DYSDEYELDEPFSDSDDED) are enriched in acidic residues. 2 consecutive C2H2-type zinc fingers follow at residues 356–380 (NECIYCEKIFPDRNTLMDHMRKRNH) and 447–470 (VVCLLCDASEDNAQSLLEHMKTTH).

Belongs to the ZNF277 family. Interacts with rps-2.

The protein resides in the cytoplasm. Probable transcription factor. Limits the ability to tolerate cold environment or cold-warm stress. In complex with rps-2, mediates the cold-warm shock response by promoting translocation of components of the RNA exosome from the nucleolus to nucleoplasm. The sequence is that of Zinc finger protein ztf-7 from Caenorhabditis elegans.